A 1464-amino-acid chain; its full sequence is Collagen alpha-1(III) chain (1464 aa).

A signal peptide spans 1–23; it reads MMSFVQSGTWFLLTLLHPTLILA. A propeptide spans 24–154 (N-terminal propeptide); that stretch reads QQSNVDELGC…CPTGGQNYSP (131 aa). The VWFC domain occupies 31-90; sequence LGCSHLGQSYESRDVWKPEPCQICVCDSGSVLCDDIICDEEPLDCPNPEIPFGECCAICP. A disordered region spans residues 97-1195; that stretch reads PVLPDGHGPQ…PGPPGAPGPC (1099 aa). A compositionally biased stretch (low complexity) spans 100-109; that stretch reads PDGHGPQGPK. Positions 147–156 are enriched in polar residues; the sequence is TGGQNYSPQF. Residues 155-169 are nonhelical region (N-terminal); the sequence is QFDSYDVKSGVGGMG. Residues 164-173 show a composition bias toward gly residues; it reads GVGGMGGYPG. A triple-helical region region spans residues 170–1195; the sequence is GYPGPAGPPG…PGPPGAPGPC (1026 aa). A compositionally biased stretch (pro residues) spans 174 to 184; sequence PAGPPGPPGPP. A compositionally biased stretch (low complexity) spans 186-198; sequence SSGHPGSPGSPGY. The span at 228 to 240 shows a compositional bias: basic and acidic residues; the sequence is KDGESGRPGRPGE. K262 carries the 5-hydroxylysine; alternate modification. O-linked (Gal...) hydroxylysine; alternate glycosylation is present at K262. Over residues 265–276 the composition is skewed to basic and acidic residues; sequence RGFDGRNGEKGE. At K283 the chain carries 5-hydroxylysine. Low complexity-rich tracts occupy residues 310-321 and 354-379; these read PGLPGAAGARGN and PAGSPGSNGSPGQRGEPGPQGHAGAQ. Gly residues predominate over residues 389 to 398; the sequence is GSPGGKGEMG. Low complexity predominate over residues 399-412; sequence PAGIPGAPGLIGAR. The span at 527 to 548 shows a compositional bias: gly residues; that stretch reads GTPGGPGIRGMPGSPGGPGNDG. Residues 606-615 show a composition bias toward low complexity; the sequence is PAGKNGETGP. Composition is skewed to gly residues over residues 641-650 and 668-677; these read GIPGTGGPPG and GAPGGKGDSG. Over residues 678–691 the composition is skewed to low complexity; sequence APGERGPPGTAGIP. The span at 692 to 708 shows a compositional bias: gly residues; it reads GARGGAGPPGPEGGKGP. Residues 717–727 show a composition bias toward low complexity; the sequence is ASGSPGLQGMP. The segment covering 822–834 has biased composition (basic and acidic residues); sequence AKGERGAPGEKGE. The residue at position 859 (K859) is a 5-hydroxylysine. Gly residues predominate over residues 863–879; sequence GSPGGPGTAGFPGGRGL. Positions 889–906 are enriched in pro residues; it reads PGPPGPSGAPGKDGPPGP. 2 stretches are compositionally biased toward low complexity: residues 907-934 and 945-960; these read AGNSGSPGNPGIAGPKGDAGQPGEKGPP and PLGIAGLTGARGLAGP. The residue at position 976 (K976) is a 5-hydroxylysine. Pro residues predominate over residues 1045 to 1054; the sequence is PGHPGPPGPV. Over residues 1068–1084 the composition is skewed to low complexity; it reads PAGPSGAPGPAGARGAP. 5-hydroxylysine is present on residues K1093 and K1105. The segment covering 1120-1132 has biased composition (low complexity); the sequence is PGAAGHQGAIGSP. The span at 1180–1192 shows a compositional bias: pro residues; the sequence is PGQPGPPGPPGAP. Positions 1220–1464 are cleaved as a propeptide — C-terminal propeptide; sequence DDPMDFKINT…GVDIGPVCFL (245 aa). The Fibrillar collagen NC1 domain occupies 1230–1464; it reads EEIMSSLKSV…GVDIGPVCFL (235 aa). Intrachain disulfides connect C1260–C1292, C1300–C1462, and C1370–C1415. 5 residues coordinate Ca(2+): D1278, N1280, Q1281, C1283, and D1286.

This sequence belongs to the fibrillar collagen family. Trimers of identical alpha 1(III) chains. The chains are linked to each other by interchain disulfide bonds. Trimers are also cross-linked via hydroxylysines. Interacts with ADGRG1. Post-translationally, proline residues at the third position of the tripeptide repeating unit (G-X-Y) are hydroxylated in some or all of the chains. O-linked glycan consists of a Glc-Gal disaccharide bound to the oxygen atom of a post-translationally added hydroxyl group. As to expression, expressed in embryonic brain, specifically in the meninges, pial basement membrane and blood vessels (at protein level).

The protein localises to the secreted. The protein resides in the extracellular space. It localises to the extracellular matrix. Collagen type III occurs in most soft connective tissues along with type I collagen. Involved in regulation of cortical development. Is the major ligand of ADGRG1 in the developing brain and binding to ADGRG1 inhibits neuronal migration and activates the RhoA pathway by coupling ADGRG1 to GNA13 and possibly GNA12. In Mus musculus (Mouse), this protein is Collagen alpha-1(III) chain (Col3a1).